Here is a 104-residue protein sequence, read N- to C-terminus: Snakin-2 (104 aa).

Residues 1–23 (MAISKALFASLLLSLLLLEQVQS) form the signal peptide. The propeptide at 24-38 (IQTDQVTSNAISEAA) is removed in mature form.

Belongs to the GASA family. Six disulfide bonds may be present. As to expression, expressed in tubers, stems, flowers, shoot apex and leaves, but not in roots or stolons.

The protein localises to the secreted. It localises to the cell wall. Has an antimicrobial activity. Causes a rapid aggregation of both Gram-positive and Gram-negative bacteria, but the antimicrobial activity is not correlated with the capacity to aggregate bacteria. The chain is Snakin-2 (SN2) from Solanum tuberosum (Potato).